A 152-amino-acid polypeptide reads, in one-letter code: uncharacterized protein (152 aa).

Topologically, residues 1 to 5 (MWFPQ) are cytoplasmic. Residues 6–26 (IIAGMAAGGAASAMTPGKVLF) form a helical membrane-spanning segment. The Extracellular segment spans residues 27–38 (TNALGLGCSRSR). The helical transmembrane segment at 39–59 (GLFLEMFGTAVLCFTVLMTAV) threads the bilayer. Over 60 to 65 (EKRETN) the chain is Cytoplasmic. Residues 66–86 (FMAALPIGISLFMAHMALTGY) form a helical membrane-spanning segment. Residues 87–110 (TGTGVNPARSLGAAVAARYFPHYH) lie on the Extracellular side of the membrane. Positions 92–94 (NPA) match the NPA motif. Residues 111–131 (WIYWISPLLGAFLAWSVWQLL) traverse the membrane as a helical segment. The Cytoplasmic portion of the chain corresponds to 132 to 152 (QILDYTTYVNAEKAAGQKKED).

It belongs to the MIP/aquaporin (TC 1.A.8) family.

It is found in the membrane. This is an uncharacterized protein from Saccharomyces cerevisiae (strain YJM789) (Baker's yeast).